Here is a 218-residue protein sequence, read N- to C-terminus: Esterase FPY3 (218 aa).

Active-site charge relay system residues include S95, D163, and H190.

This sequence belongs to the LovG family.

The protein operates within secondary metabolite biosynthesis. In terms of biological role, esterase; part of the gene cluster that mediates the biosynthesis of the gamma-pyrones fusapyrone (FPY) and deoxyfusapyrone (dFPY). FPY is an undecaketide and thus likely synthesized by the polyketide synthase FPY1 from acetyl-CoA functioning as starter unit and the addition of 10 malonyl-CoA extender units by successive Claisen-condensations. Next to this, FPY shares some rare features: C-glycosylated 4-deoxyglucose at C-3, a gem-dimethyl group at C-13, and an alpha-beta to beta-gamma double bond shift at C-20. During FPY biosynthesis mono-C-methyl groups are transferred to the tetra-, penta-, hexa- and heptaketide, while two C-methyl groups are transferred to the nonaketide, suggesting that the CMet domain is programmed to selectively catalyze two successive C-alpha-methylation reactions of the nonaketide, while other alpha-carbons are non- or mono-methylated only. While the origin of the 4'-deoxyglucose moiety remains opaque, its transfer to C-3 is most likely mediated by the C-glycosyltransferase FPY2. Next to this, the hydroxyl group present at C-33 and discriminating between FPY and dFPY, is likely to be installed by the cytochrome P450 monooxygenase FPY7. No putative function can be predicted for the remaining genes FPY3-FPY6. This Fusarium mangiferae (Mango malformation disease fungus) protein is Esterase FPY3.